The sequence spans 471 residues: Serine/threonine-protein kinase sid1 (471 aa).

A Protein kinase domain is found at 9–260 (YTLLRKLGSG…AKELLQHPFI (252 aa)). ATP-binding positions include 15–23 (LGSGSFGVV) and K38. D129 (proton acceptor) is an active-site residue.

This sequence belongs to the protein kinase superfamily. STE Ser/Thr protein kinase family. STE20 subfamily. Interacts with cdc14.

Its subcellular location is the cytoplasm. The protein localises to the cytoskeleton. It localises to the microtubule organizing center. It is found in the spindle pole body. The catalysed reaction is L-seryl-[protein] + ATP = O-phospho-L-seryl-[protein] + ADP + H(+). It catalyses the reaction L-threonyl-[protein] + ATP = O-phospho-L-threonyl-[protein] + ADP + H(+). Functionally, has a role in the septation initiation network (SIN) required for cytokinesis. The chain is Serine/threonine-protein kinase sid1 (sid1) from Schizosaccharomyces pombe (strain 972 / ATCC 24843) (Fission yeast).